We begin with the raw amino-acid sequence, 231 residues long: Chlorophyll a-b binding protein 1B-20, chloroplastic (231 aa).

A disordered region spans residues 1–25; it reads RIQAYRFRTRVPPSPAASGSPRSTR. The N-terminal 31 residues, 1–31, are a transit peptide targeting the chloroplast; the sequence is RIQAYRFRTRVPPSPAASGSPRSTRRDVAVQ. Residue tryptophan 36 participates in chlorophyll b binding. Chlorophyll a is bound at residue phenylalanine 56. Residues arginine 80, serine 118, glutamate 133, and arginine 136 each contribute to the chlorophyll b site. The chlorophyll a site is built by lysine 182, glutamate 183, asparagine 186, arginine 188, glutamine 200, and histidine 215. Residues 183-199 form a helical membrane-spanning segment; that stretch reads ELANGRLAMLAFLGFLV.

The protein belongs to the light-harvesting chlorophyll a/b-binding (LHC) protein family. As to quaternary structure, the LHC complex consists of chlorophyll a-b binding proteins. Binds at least 14 chlorophylls (8 Chl-a and 6 Chl-b) and carotenoids such as lutein and neoxanthin. serves as cofactor. In terms of processing, photoregulated by reversible phosphorylation of its threonine residues.

The protein resides in the plastid. Its subcellular location is the chloroplast thylakoid membrane. The light-harvesting complex (LHC) functions as a light receptor, it captures and delivers excitation energy to photosystems with which it is closely associated. This chain is Chlorophyll a-b binding protein 1B-20, chloroplastic (LHC Ib-20), found in Hordeum vulgare (Barley).